We begin with the raw amino-acid sequence, 80 residues long: MLSKEALIKILSQNEGGNDMKIADEVVPMIQKYLDIFIDEAVLRSLQSHKDINGERGDKSPLELSHQDLERIVGLLLMDM.

It belongs to the CENP-X/MHF2 family. The MHF histone-fold complex is a heterotetramer of 2 MHF1-MHF2 heterodimers. Together with MPH1/FANCM, forms the FANCM-MHF complex. Component of the inner kinetochore constitutive centromere-associated network (CCAN) (also known as central kinetochore CTF19 complex in yeast), which is composed of at least AME1, CHL4, CNN1, CTF3, CTF19, IML3, MCM16, MCM21, MCM22, MHF1, MHF2, MIF2, NKP1, NKP2, OKP1 and WIP1.

Functionally, DNA-binding component of a FANCM-MHF complex involved in DNA damage repair and genome maintenance. FANCM-MHF promotes gene conversion at blocked replication forks, probably by reversal of the stalled fork. Component of the kinetochore, a multiprotein complex that assembles on centromeric DNA and attaches chromosomes to spindle microtubules, mediating chromosome segregation and sister chromatid segregation during meiosis and mitosis. Component of the inner kinetochore constitutive centromere-associated network (CCAN), which serves as a structural platform for outer kinetochore assembly. This Saccharomyces cerevisiae (strain ATCC 204508 / S288c) (Baker's yeast) protein is Inner kinetochore subunit MHF2.